Reading from the N-terminus, the 318-residue chain is Ubiquitin-like domain-containing CTD phosphatase 1 (318 aa).

Positions 3–81 constitute a Ubiquitin-like domain; sequence VSVIIKWGGQ…IMMMGTREES (79 aa). The region spanning 133-294 is the FCP1 homology domain; that stretch reads PRPGKRLLVL…YKLSQYLKEI (162 aa). Mg(2+) contacts are provided by Asp143, Asp145, and Asp253.

Mg(2+) serves as cofactor.

Its subcellular location is the nucleus. The enzyme catalyses O-phospho-L-seryl-[protein] + H2O = L-seryl-[protein] + phosphate. It catalyses the reaction O-phospho-L-threonyl-[protein] + H2O = L-threonyl-[protein] + phosphate. Its function is as follows. Dephosphorylates 26S nuclear proteasomes, thereby decreasing their proteolytic activity. Recruited to the 19S regulatory particle of the 26S proteasome where it dephosphorylates 19S component psmc2 which impairs psmc2 ATPase activity and disrupts 26S proteasome assembly. Has also been reported to stimulate the proteolytic activity of the 26S proteasome. The polypeptide is Ubiquitin-like domain-containing CTD phosphatase 1 (ublcp1) (Danio rerio (Zebrafish)).